The following is a 136-amino-acid chain: Small ribosomal subunit protein uS8c (136 aa).

This sequence belongs to the universal ribosomal protein uS8 family. Part of the 30S ribosomal subunit.

The protein localises to the plastid. Its subcellular location is the chloroplast. Functionally, one of the primary rRNA binding proteins, it binds directly to 16S rRNA central domain where it helps coordinate assembly of the platform of the 30S subunit. The polypeptide is Small ribosomal subunit protein uS8c (rps8) (Citrus sinensis (Sweet orange)).